Here is a 67-residue protein sequence, read N- to C-terminus: Protein AaeX (67 aa).

Transmembrane regions (helical) follow at residues Leu-3–Leu-23 and Phe-43–Ser-63.

This sequence belongs to the AaeX family.

Its subcellular location is the cell membrane. This is Protein AaeX from Enterobacter sp. (strain 638).